A 344-amino-acid chain; its full sequence is MLELKQVGKVYQREQQTFTALSDISLKIEAGEIYGIIGYSGAGKSTLIRLLNGLEKPTSGDVLVNGQSIVGLSEQAMRPIRQKIGMIFQHFNLLWSKTILENIALPLKLAGVGKKERLAKAKEMLALVELTDLGAAYPSELSGGQKQRVAIARALISEPAILLCDEATSALDPKTTNSILSLLAKINQEMGITIVLVTHEMDAVRRICQRIAVMAAGRVIEEGTTQAIFETPQAEVTKAFVSESLVITPSETAASIEQLLTRVPEGTIIKLRFNEEQSSQPVIGQLMRRYPSVEVSVISGSLQQTINGALGYLYIQIQASPDDLKQALSDLSQQTIEVEVLRHG.

Residues Leu-2–Val-241 enclose the ABC transporter domain. Position 38–45 (Gly-38–Ser-45) interacts with ATP.

Belongs to the ABC transporter superfamily. Methionine importer (TC 3.A.1.24) family. The complex is composed of two ATP-binding proteins (MetN), two transmembrane proteins (MetI) and a solute-binding protein (MetQ).

The protein localises to the cell membrane. The enzyme catalyses L-methionine(out) + ATP + H2O = L-methionine(in) + ADP + phosphate + H(+). It carries out the reaction D-methionine(out) + ATP + H2O = D-methionine(in) + ADP + phosphate + H(+). In terms of biological role, part of the ABC transporter complex MetNIQ involved in methionine import. Responsible for energy coupling to the transport system. The chain is Methionine import ATP-binding protein MetN from Latilactobacillus sakei subsp. sakei (strain 23K) (Lactobacillus sakei subsp. sakei).